The primary structure comprises 191 residues: Small ribosomal subunit protein eS7 (191 aa).

The protein belongs to the eukaryotic ribosomal protein eS7 family.

The polypeptide is Small ribosomal subunit protein eS7 (RPS7) (Hordeum vulgare (Barley)).